The following is a 107-amino-acid chain: U1-lycotoxin-Ls1x (107 aa).

A signal peptide spans 1–20 (MMKVLVVVALLVTLISYSSS). The propeptide occupies 21–41 (EGIDDLEADELLSLMANEHPR). Intrachain disulfides connect Cys44–Cys59, Cys51–Cys68, Cys58–Cys86, and Cys70–Cys84.

It belongs to the neurotoxin 19 (CSTX) family. 04 (U1-Lctx) subfamily. In terms of tissue distribution, expressed by the venom gland.

It localises to the secreted. The chain is U1-lycotoxin-Ls1x from Lycosa singoriensis (Wolf spider).